The chain runs to 89 residues: Probable Fe(2+)-trafficking protein (89 aa).

The protein belongs to the Fe(2+)-trafficking protein family.

Functionally, could be a mediator in iron transactions between iron acquisition and iron-requiring processes, such as synthesis and/or repair of Fe-S clusters in biosynthetic enzymes. The chain is Probable Fe(2+)-trafficking protein from Acinetobacter baumannii (strain SDF).